Here is a 262-residue protein sequence, read N- to C-terminus: Phycoerythrobilin:ferredoxin oxidoreductase (262 aa).

Belongs to the HY2 family.

It catalyses the reaction (3Z)-phycoerythrobilin + oxidized 2[4Fe-4S]-[ferredoxin] = 15,16-dihydrobiliverdin + reduced 2[4Fe-4S]-[ferredoxin] + 2 H(+). Functionally, catalyzes the two-electron reduction of the C2 and C3(1) diene system of 15,16-dihydrobiliverdin. The protein is Phycoerythrobilin:ferredoxin oxidoreductase (pebB) of Parasynechococcus marenigrum (strain WH8102).